Consider the following 217-residue polypeptide: ATP-dependent Clp protease proteolytic subunit (217 aa).

Ser-119 functions as the Nucleophile in the catalytic mechanism. His-144 is an active-site residue.

It belongs to the peptidase S14 family. Fourteen ClpP subunits assemble into 2 heptameric rings which stack back to back to give a disk-like structure with a central cavity, resembling the structure of eukaryotic proteasomes.

The protein resides in the cytoplasm. It catalyses the reaction Hydrolysis of proteins to small peptides in the presence of ATP and magnesium. alpha-casein is the usual test substrate. In the absence of ATP, only oligopeptides shorter than five residues are hydrolyzed (such as succinyl-Leu-Tyr-|-NHMec, and Leu-Tyr-Leu-|-Tyr-Trp, in which cleavage of the -Tyr-|-Leu- and -Tyr-|-Trp bonds also occurs).. In terms of biological role, cleaves peptides in various proteins in a process that requires ATP hydrolysis. Has a chymotrypsin-like activity. Plays a major role in the degradation of misfolded proteins. The sequence is that of ATP-dependent Clp protease proteolytic subunit from Bordetella bronchiseptica (strain ATCC BAA-588 / NCTC 13252 / RB50) (Alcaligenes bronchisepticus).